The sequence spans 428 residues: MNYTETVAYIHSFPRLAKTGDHRRILTLLHALGNPQQQGRYIHVTGTNGKGSAANAIAHVLEASGLTVGLYTSPFIMRFNERIMIDHEPIPDAALVNAVAFVRAALERLQQQQADFNVTEFEFITALGYWYFRQRQVDVAVIEVGIGGDTDSTNVITPVVSVLTEVALDHQKLLGHTITAIAKHKAGIIKRGIPVVTGNLVPDAAAVVAAKVATTGSQWLRFDRDFSVPKAKLHGWGQRFTYEDQDGRISDLEVPLVGDYQQRNMAIAIQTAKVYAKQTEWPLTPQNIRQGLAASHWPARLEKISDTPLIVIDGAHNPDGINGLITALKQLFSQPITVIAGILADKDYAAMADRLTAAFSTVYLVPVPGTPRALPEAGYEALHEGRLKDSWQEALAASLNDVPDQPIVITGSLYLASAVRQTLLGGKS.

49–52 (GKGS) is an ATP binding site. Residue Ser-73 participates in Mg(2+) binding. Residues Phe-75 and Arg-82 each coordinate (6R)-5,10-methylenetetrahydrofolyl-(gamma-L-Glu)n. Residues Glu-143 and His-170 each coordinate Mg(2+). Lys-185 carries the N6-carboxylysine modification. ATP-binding positions include Asn-264, Arg-300, and 313-316 (DGAH). Ser-417 is a (6R)-5,10-methylenetetrahydrofolyl-(gamma-L-Glu)n binding site.

It belongs to the folylpolyglutamate synthase family. As to quaternary structure, monomer. Mg(2+) is required as a cofactor.

The enzyme catalyses (6S)-5,6,7,8-tetrahydrofolyl-(gamma-L-Glu)(n) + L-glutamate + ATP = (6S)-5,6,7,8-tetrahydrofolyl-(gamma-L-Glu)(n+1) + ADP + phosphate + H(+). The catalysed reaction is (6R)-5,10-methylenetetrahydrofolyl-(gamma-L-Glu)(n) + L-glutamate + ATP = (6R)-5,10-methylenetetrahydrofolyl-(gamma-L-Glu)(n+1) + ADP + phosphate + H(+). It catalyses the reaction 10-formyltetrahydrofolyl-(gamma-L-Glu)(n) + L-glutamate + ATP = 10-formyltetrahydrofolyl-(gamma-L-Glu)(n+1) + ADP + phosphate + H(+). With respect to regulation, competitively inhibited by adenosine 5'-(3-thio)triphosphate and beta,gamma-methylene-ATP. Its function is as follows. Involved in the conversion of folates to polyglutamate derivatives, and likely functions in the retention of cellular folate pools. Catalyzes successive MgATP-dependent additions of glutamate to a pteroylmonoglutamate substrate, with a high preference for 5,10-methylenetetrahydrofolate (mTHF). Thus, metabolizes mTHF to the tetraglutamate derivative, but longer glutamate chain length products are not observed. Tetrahydrofolate (H4PteGlu) and 10-formyl-H4PteGlu are poorer folate substrates. In contrast to E.coli FolC, this enzyme does not display dihydrofolate synthase activity. This is Folylpolyglutamate synthase from Lacticaseibacillus casei (Lactobacillus casei).